The chain runs to 431 residues: Adenylosuccinate synthetase (431 aa).

Residues 13-19 (GDEGKGK) and 41-43 (GHT) contribute to the GTP site. Catalysis depends on aspartate 14, which acts as the Proton acceptor. Mg(2+)-binding residues include aspartate 14 and glycine 41. IMP is bound by residues 14-17 (DEGK), 39-42 (NAGH), threonine 130, arginine 144, glutamine 225, threonine 240, and arginine 304. The Proton donor role is filled by histidine 42. 300 to 306 (ATTGRKR) is a binding site for substrate. Residues arginine 306, 332–334 (KLD), and 415–417 (STG) contribute to the GTP site.

Belongs to the adenylosuccinate synthetase family. As to quaternary structure, homodimer. Mg(2+) is required as a cofactor.

The protein resides in the cytoplasm. It carries out the reaction IMP + L-aspartate + GTP = N(6)-(1,2-dicarboxyethyl)-AMP + GDP + phosphate + 2 H(+). It functions in the pathway purine metabolism; AMP biosynthesis via de novo pathway; AMP from IMP: step 1/2. In terms of biological role, plays an important role in the de novo pathway of purine nucleotide biosynthesis. Catalyzes the first committed step in the biosynthesis of AMP from IMP. This chain is Adenylosuccinate synthetase, found in Shewanella piezotolerans (strain WP3 / JCM 13877).